Here is a 457-residue protein sequence, read N- to C-terminus: Cation efflux system protein CusC (457 aa).

Positions 1–17 (MSPCKLLPFCVALALTG) are cleaved as a signal peptide. Cys-18 carries N-palmitoyl cysteine lipidation. Residue Cys-18 is the site of S-diacylglycerol cysteine attachment.

This sequence belongs to the outer membrane factor (OMF) (TC 1.B.17) family. Homotrimer. Component of the cus efflux system composed of CusA, CusB, CusC and CusF.

It is found in the cell outer membrane. Its function is as follows. Forms pores that allow passive diffusion of cations across the outer membrane. Part of a cation efflux system that mediates resistance to copper and silver. In pathogenic strains it allows the bacteria to invade brain microvascular endothelial cells (BMEC) thus allowing it to cross the blood-brain barrier and cause neonatal meningitis. The sequence is that of Cation efflux system protein CusC (cusC) from Escherichia coli (strain K12).